The following is a 177-amino-acid chain: Bifunctional protein PyrR (177 aa).

The PRPP-binding motif lies at 99–111; sequence VVLVDDVLFTGRT.

The protein belongs to the purine/pyrimidine phosphoribosyltransferase family. PyrR subfamily.

The catalysed reaction is UMP + diphosphate = 5-phospho-alpha-D-ribose 1-diphosphate + uracil. Functionally, regulates the transcription of the pyrimidine nucleotide (pyr) operon in response to exogenous pyrimidines. In terms of biological role, also displays a weak uracil phosphoribosyltransferase activity which is not physiologically significant. In Citrifermentans bemidjiense (strain ATCC BAA-1014 / DSM 16622 / JCM 12645 / Bem) (Geobacter bemidjiensis), this protein is Bifunctional protein PyrR.